We begin with the raw amino-acid sequence, 745 residues long: Exocyst complex component 3 (745 aa).

The residue at position 28 (Lys28) is an N6-acetyllysine.

Belongs to the SEC6 family. As to quaternary structure, the exocyst complex is composed of EXOC1, EXOC2, EXOC3, EXOC4, EXOC5, EXOC6, EXOC7 and EXOC8. Interacts with EXOC3L1. Interacts with BIRC6/bruce. Interacts with MYRIP. Interacts with SLC6A9.

It localises to the cytoplasm. The protein resides in the perinuclear region. The protein localises to the cell projection. Its subcellular location is the growth cone. It is found in the neuron projection. It localises to the midbody. The protein resides in the golgi apparatus. Component of the exocyst complex involved in the docking of exocytic vesicles with fusion sites on the plasma membrane. This Bos taurus (Bovine) protein is Exocyst complex component 3 (EXOC3).